Consider the following 918-residue polypeptide: MQRSIMSFFQPTTTEGKAKKPEKEIPSSIREKEPPPKVALKERNRAVPESDSPVKRPGRKVAQVLSSEGEDEDEAPGTPQVQKPVSDSKQSSPPSPDSCPENSPVFNCSPSMDISPSGFPKRRTARKQLPKRTIQDTLEEPNEDKAKAVKKRKKEDPQTPPESLTEAEEVNQKEEQVEDQPTVPPEPTESPESVTLTKTENIPMCKAGVKQKPQEEEQSKPPARGAKPLSSFFTPRKPAVKTEVKQEESDTPRKEETKGAPDPTNYNPSKSNYHPIEDACWKHGQKVPFLAVARTFEKIEEVSARLKMVETLSNLLRSVVALSPTDLLPVLYLSLNRLGPPQQGLELGVGDGVLLKAVAQATGRQLESIRAEVAEKGDVGLVAENSRSTQRLMLPSPPLTVSGVFTKFCDIARLTGSASMAKKMDIIKGLFVACRYSEARFIARSLSGRLRLGLAEQSVLAALAQAGSLTPPGQEFPTVVVDAGKGKTAEARKMWLEEQGMILKQTFCEVPDLDRIIPVLLEHGLESLPEHCKLSPGVPLKPMLAHPTRGVREVLKRFEEVDFTCEYKYYGQRAQIHVLEGGEVKIFSRNQEDNSGKYPDIISRIPKIKHPSVTSFILDTEAVAWDREKKQIQPFQVLTTRKRKEVDASEIQVQVCLYAFDLIYLNGESLARQPLSRRRQLLRENFVETEGEFVFATSLDTKDIEQIAEFLEQSVKDSCEGLMVKTLDVDATYEIAKRSHNWLKLKKDYLEGVGDTLDLVVIGAYLGRGKRPGRYGGFLLAAYDEESEELAAICKLGTGFSDEELEEHHQNMQALLLPTPRPYVRIDGAVAPNHWLDPSIVWEVKCADLTLSPIYRAARGMVDKEKGISLRFPRFIRVREDKQPEQATTSDQVASLYRKQSQIQNQQSSDLDSDVEDY.

Residues 1-15 (MQRSIMSFFQPTTTE) show a composition bias toward polar residues. Residues 1–271 (MQRSIMSFFQ…DPTNYNPSKS (271 aa)) form a disordered region. The segment covering 16–54 (GKAKKPEKEIPSSIREKEPPPKVALKERNRAVPESDSPV) has biased composition (basic and acidic residues). Residues Ser50, Ser52, Ser66, and Ser67 each carry the phosphoserine modification. Position 78 is a phosphothreonine (Thr78). Residues 81 to 92 (VQKPVSDSKQSS) are compositionally biased toward low complexity. Residues 100 to 114 (PENSPVFNCSPSMDI) are compositionally biased toward polar residues. The span at 120–130 (PKRRTARKQLP) shows a compositional bias: basic residues. Residue Lys145 is modified to N6-acetyllysine. Position 195 is a phosphothreonine (Thr195). Residue Lys227 is modified to N6-acetyllysine. Ser230 and Ser231 each carry phosphoserine. Thr234 carries the phosphothreonine modification. Residues 240–259 (VKTEVKQEESDTPRKEETKG) show a composition bias toward basic and acidic residues. Position 566 (Glu566) interacts with ATP. The active-site N6-AMP-lysine intermediate is the Lys568. Positions 573 and 621 each coordinate ATP. Glu621 provides a ligand contact to Mg(2+). Residues 642–644 (KRK) are interaction with target DNA. Position 720 (Glu720) interacts with Mg(2+). The ATP site is built by Lys725 and Lys744. The residue at position 798 (Thr798) is a Phosphothreonine. A phosphoserine mark is found at Ser801, Ser908, Ser909, and Ser913. A disordered region spans residues 881 to 918 (DKQPEQATTSDQVASLYRKQSQIQNQQSSDLDSDVEDY). Polar residues predominate over residues 885–910 (EQATTSDQVASLYRKQSQIQNQQSSD).

Belongs to the ATP-dependent DNA ligase family. Interacts with PCNA. Interacts with POLB. Requires Mg(2+) as cofactor.

The protein resides in the nucleus. The catalysed reaction is ATP + (deoxyribonucleotide)n-3'-hydroxyl + 5'-phospho-(deoxyribonucleotide)m = (deoxyribonucleotide)n+m + AMP + diphosphate.. DNA ligase that seals nicks in double-stranded during DNA repair. Also involved in DNA replication and DNA recombination. This is DNA ligase 1 (Lig1) from Rattus norvegicus (Rat).